The primary structure comprises 210 residues: NAD(P)H-hydrate epimerase (210 aa).

The YjeF N-terminal domain occupies 11–210 (AHNFDDYTIN…TVADIGIYEP (200 aa)). 60–64 (NNGGD) is a (6S)-NADPHX binding site. 2 residues coordinate K(+): N61 and D123. (6S)-NADPHX contacts are provided by residues 127-133 (GVGLSRD) and D156. Residue T159 participates in K(+) binding.

It belongs to the NnrE/AIBP family. It depends on K(+) as a cofactor.

The enzyme catalyses (6R)-NADHX = (6S)-NADHX. The catalysed reaction is (6R)-NADPHX = (6S)-NADPHX. In terms of biological role, catalyzes the epimerization of the S- and R-forms of NAD(P)HX, a damaged form of NAD(P)H that is a result of enzymatic or heat-dependent hydration. This is a prerequisite for the S-specific NAD(P)H-hydrate dehydratase to allow the repair of both epimers of NAD(P)HX. In Oenococcus oeni (strain ATCC BAA-331 / PSU-1), this protein is NAD(P)H-hydrate epimerase.